We begin with the raw amino-acid sequence, 203 residues long: ATP-dependent Clp protease proteolytic subunit (203 aa).

S100 serves as the catalytic Nucleophile. Residue H125 is part of the active site.

It belongs to the peptidase S14 family. Fourteen ClpP subunits assemble into 2 heptameric rings which stack back to back to give a disk-like structure with a central cavity, resembling the structure of eukaryotic proteasomes.

The protein localises to the cytoplasm. It catalyses the reaction Hydrolysis of proteins to small peptides in the presence of ATP and magnesium. alpha-casein is the usual test substrate. In the absence of ATP, only oligopeptides shorter than five residues are hydrolyzed (such as succinyl-Leu-Tyr-|-NHMec, and Leu-Tyr-Leu-|-Tyr-Trp, in which cleavage of the -Tyr-|-Leu- and -Tyr-|-Trp bonds also occurs).. In terms of biological role, cleaves peptides in various proteins in a process that requires ATP hydrolysis. Has a chymotrypsin-like activity. Plays a major role in the degradation of misfolded proteins. The polypeptide is ATP-dependent Clp protease proteolytic subunit (Anaeromyxobacter sp. (strain K)).